A 49-amino-acid polypeptide reads, in one-letter code: Soritesidine (49 aa).

The protein resides in the secreted. In terms of biological role, very potent toxin that exhibits a wide range of toxicities over various organisms and cells including brine shrimp larvae (Artemia salina), sea hare eggs (Aplysia kurodai), mice, and cultured mammalian cells. An SOR-containing fraction cleaves plasmid DNA in a bivalent metal ion dependent manner suggesting genotoxicity of SOR. The chain is Soritesidine from Spongosorites sp. (strain QM G324170) (Okinawan marine Sponge).